The following is a 176-amino-acid chain: ATP-dependent protease subunit HslV (176 aa).

Thr-2 is an active-site residue. The Na(+) site is built by Ala-157, Cys-160, and Thr-163.

This sequence belongs to the peptidase T1B family. HslV subfamily. A double ring-shaped homohexamer of HslV is capped on each side by a ring-shaped HslU homohexamer. The assembly of the HslU/HslV complex is dependent on binding of ATP.

It localises to the cytoplasm. It carries out the reaction ATP-dependent cleavage of peptide bonds with broad specificity.. Its activity is regulated as follows. Allosterically activated by HslU binding. Protease subunit of a proteasome-like degradation complex believed to be a general protein degrading machinery. This chain is ATP-dependent protease subunit HslV, found in Buchnera aphidicola subsp. Acyrthosiphon pisum (strain APS) (Acyrthosiphon pisum symbiotic bacterium).